The sequence spans 197 residues: Probable inosine/xanthosine triphosphatase (197 aa).

Substrate is bound at residue 9–14; that stretch reads TSNPIK. Mg(2+) contacts are provided by D36 and D65.

This sequence belongs to the YjjX NTPase family. As to quaternary structure, homodimer. Requires Mg(2+) as cofactor. The cofactor is Mn(2+).

It catalyses the reaction XTP + H2O = XDP + phosphate + H(+). The catalysed reaction is ITP + H2O = IDP + phosphate + H(+). Functionally, phosphatase that hydrolyzes non-canonical purine nucleotides such as XTP and ITP to their respective diphosphate derivatives. Probably excludes non-canonical purines from DNA/RNA precursor pool, thus preventing their incorporation into DNA/RNA and avoiding chromosomal lesions. The chain is Probable inosine/xanthosine triphosphatase from Aeropyrum pernix (strain ATCC 700893 / DSM 11879 / JCM 9820 / NBRC 100138 / K1).